A 188-amino-acid polypeptide reads, in one-letter code: Mitochondrial import receptor subunit TOM20-1 (188 aa).

At 1 to 164 (MDKLNFFEEI…VVKNKKSSDE (164 aa)) the chain is on the cytoplasmic side. A helical transmembrane segment spans residues 165-182 (KYIVMGWVILAIGVVACI). Over 183–188 (SFRKLR) the chain is Mitochondrial intermembrane.

The protein belongs to the Tom20 family. As to quaternary structure, forms part of the preprotein translocase complex of the outer mitochondrial membrane (TOM complex) which consists of at least 6 different proteins (TOM5, TOM6, TOM7, TOM20, TOM22/TOM9 and TOM40). Component of a mitochondrial large protein complex that contains, at least, MIC60, DGS1, TOM40, TOM20 proteins, and petC/RISP. Barely detected in roots.

The protein localises to the mitochondrion outer membrane. Its function is as follows. Central component of the receptor complex responsible for the recognition and translocation of cytosolically synthesized mitochondrial preproteins. Together with TOM22 functions as the transit peptide receptor at the surface of the mitochondrion outer membrane and facilitates the movement of preproteins into the translocation pore. This Arabidopsis thaliana (Mouse-ear cress) protein is Mitochondrial import receptor subunit TOM20-1.